Consider the following 610-residue polypeptide: UvrABC system protein C (610 aa).

One can recognise a GIY-YIG domain in the interval 13-91 (HLPGVYRMYD…IKENQPKYNV (79 aa)). The UVR domain maps to 201-236 (GQVVEHLVQKMENAAQELDFEAAARFRDQIQSVRAV).

Belongs to the UvrC family. As to quaternary structure, interacts with UvrB in an incision complex.

It localises to the cytoplasm. The UvrABC repair system catalyzes the recognition and processing of DNA lesions. UvrC both incises the 5' and 3' sides of the lesion. The N-terminal half is responsible for the 3' incision and the C-terminal half is responsible for the 5' incision. The chain is UvrABC system protein C from Actinobacillus pleuropneumoniae serotype 5b (strain L20).